The sequence spans 482 residues: Ribosomal RNA small subunit methyltransferase F (482 aa).

S-adenosyl-L-methionine is bound by residues 119–125 (ASAPGSK), glutamate 143, aspartate 170, and aspartate 188. The Nucleophile role is filled by cysteine 241.

The protein belongs to the class I-like SAM-binding methyltransferase superfamily. RsmB/NOP family.

The protein resides in the cytoplasm. It carries out the reaction cytidine(1407) in 16S rRNA + S-adenosyl-L-methionine = 5-methylcytidine(1407) in 16S rRNA + S-adenosyl-L-homocysteine + H(+). In terms of biological role, specifically methylates the cytosine at position 1407 (m5C1407) of 16S rRNA. This chain is Ribosomal RNA small subunit methyltransferase F, found in Shewanella sp. (strain ANA-3).